Consider the following 956-residue polypeptide: DNA polymerase I (956 aa).

One can recognise a 5'-3' exonuclease domain in the interval 209-296 (VTVRQWVDYR…VTDLPLDIEF (88 aa)).

This sequence belongs to the DNA polymerase type-A family. As to quaternary structure, single-chain monomer with multiple functions.

It carries out the reaction DNA(n) + a 2'-deoxyribonucleoside 5'-triphosphate = DNA(n+1) + diphosphate. Functionally, a DNA polymerase, required for DNA repair after DNA damage induced by ionizing radiation (IR); this is not the major DNA polymerase. Following severe irradiation (7 kGy of gamma irradiation) genomic DNA is fragmented. DNA is progressively degraded for the first 1.5 hours after IR, in a step promoted by RecA and counterbalanced by DNA Pol I and Pol III, followed by massive DNA synthesis and genome reassembly in the next hour. Optimal priming of DNA synthesis requires both RecA and RadA, Pol III initiates DNA synthesis while both Pol I and Pol III are required for its continuation. May also have 5'-3' exonuclease activity. In Deinococcus radiodurans (strain ATCC 13939 / DSM 20539 / JCM 16871 / CCUG 27074 / LMG 4051 / NBRC 15346 / NCIMB 9279 / VKM B-1422 / R1), this protein is DNA polymerase I (polA).